The sequence spans 638 residues: Ubiquilin-2 (638 aa).

Low complexity predominate over residues 1–26 (MAENGESSGPPRPSRGPAAAPGAASP). Disordered regions lie at residues 1–31 (MAEN…AEPK) and 107–158 (RPQG…SSFG). Residue A2 is modified to N-acetylalanine. Residue S25 is modified to Phosphoserine. A Ubiquitin-like domain is found at 33 to 107 (IKVTVKTPKE…VHLVIKSQNR (75 aa)). Positions 112–158 (ATTQPSTTAGTSTTTTTTTTAAAPAATTSSAPRSSSTPTTTNSSSFG) are enriched in low complexity. 2 consecutive STI1 domains span residues 189–217 (SPEM…QLIM) and 219–258 (NPQM…MQEM). Residues 298-364 (FGGNPFATVG…SGSSSSSTTA (67 aa)) are disordered. Positions 305–316 (TVGSSSTSGEGT) are enriched in low complexity. Pro residues predominate over residues 327–336 (LPNPWAPPPT). The segment covering 337–364 (TQTAATTTTTTTTSSGSGSGSSSSSTTA) has biased composition (low complexity). STI1 domains follow at residues 393–440 (NPQL…QEQM) and 444–476 (LPNF…QQGL). 11 consecutive repeat copies span residues 505–507 (PVG), 508–510 (PVT), 511–513 (PIG), 514–516 (PIG), 517–519 (PIV), 520–522 (PFT), 523–525 (PIG), 526–528 (PIG), 529–531 (PIG), 532–533 (PT), and 535–537 (PAS). The segment at 505–537 (PVGPVTPIGPIGPIVPFTPIGPIGPIGPTGPAS) is 11 X 3 AA tandem repeats P-X-X. The disordered stretch occupies residues 528–570 (GPIGPTGPASSPGSTGTGIPPATTVSSSAPTETISPTSESGPN). Residues 533–551 (TGPASSPGSTGTGIPPATT) are compositionally biased toward low complexity. Polar residues predominate over residues 552 to 570 (VSSSAPTETISPTSESGPN). The UBA domain maps to 589 to 635 (PPNPEVRFQQQLEQLNAMGFLNREANLQALIATGGDINAAIERLLGS).

Homodimer. Forms heterodimer with UBQLN1. Binds UBE3A and BTRC. Interacts with the 19S proteasome subunit. Interacts with C9orf72. Binds CD47. Interacts with HNRNPA1 and HNRNPU. Found in a complex with UBQLN1 and MAP1LC3A/B/C. Interacts with EPS15, EPN1 and EPN2. Interacts with HERPUD1. Interacts with RAD23A. Interacts with TARDBP. Interacts (via C-terminus) with FAF2 (via N-terminus). Interacts with UBQLN4. In terms of processing, degraded during macroautophagy. In terms of tissue distribution, highly expressed in smooth muscle. Expression in other tissues is very low.

The protein localises to the cytoplasm. The protein resides in the nucleus. It is found in the membrane. Its subcellular location is the cytoplasmic vesicle. It localises to the autophagosome. Functionally, plays an important role in the regulation of different protein degradation mechanisms and pathways including ubiquitin-proteasome system (UPS), autophagy and the endoplasmic reticulum-associated protein degradation (ERAD) pathway. Mediates the proteasomal targeting of misfolded or accumulated proteins for degradation by binding (via UBA domain) to their polyubiquitin chains and by interacting (via ubiquitin-like domain) with the subunits of the proteasome. Plays a role in the ERAD pathway via its interaction with ER-localized proteins FAF2/UBXD8 and HERPUD1 and may form a link between the polyubiquitinated ERAD substrates and the proteasome. Involved in the regulation of macroautophagy and autophagosome formation; required for maturation of autophagy-related protein LC3 from the cytosolic form LC3-I to the membrane-bound form LC3-II and may assist in the maturation of autophagosomes to autolysosomes by mediating autophagosome-lysosome fusion. Negatively regulates the endocytosis of GPCR receptors: AVPR2 and ADRB2, by specifically reducing the rate at which receptor-arrestin complexes concentrate in clathrin-coated pits (CCPs). Links CD47 to vimentin-containing intermediate filaments of the cytoskeleton. This is Ubiquilin-2 (Ubqln2) from Mus musculus (Mouse).